We begin with the raw amino-acid sequence, 208 residues long: Imidazole glycerol phosphate synthase subunit HisH (208 aa).

Positions 1–206 (MIVIIDYDTG…KEVTYSCKSS (206 aa)) constitute a Glutamine amidotransferase type-1 domain. Cys79 functions as the Nucleophile in the catalytic mechanism. Residues His181 and Glu183 contribute to the active site.

In terms of assembly, heterodimer of HisH and HisF.

It is found in the cytoplasm. The enzyme catalyses 5-[(5-phospho-1-deoxy-D-ribulos-1-ylimino)methylamino]-1-(5-phospho-beta-D-ribosyl)imidazole-4-carboxamide + L-glutamine = D-erythro-1-(imidazol-4-yl)glycerol 3-phosphate + 5-amino-1-(5-phospho-beta-D-ribosyl)imidazole-4-carboxamide + L-glutamate + H(+). It carries out the reaction L-glutamine + H2O = L-glutamate + NH4(+). Its pathway is amino-acid biosynthesis; L-histidine biosynthesis; L-histidine from 5-phospho-alpha-D-ribose 1-diphosphate: step 5/9. Functionally, IGPS catalyzes the conversion of PRFAR and glutamine to IGP, AICAR and glutamate. The HisH subunit catalyzes the hydrolysis of glutamine to glutamate and ammonia as part of the synthesis of IGP and AICAR. The resulting ammonia molecule is channeled to the active site of HisF. The sequence is that of Imidazole glycerol phosphate synthase subunit HisH from Listeria monocytogenes serotype 4a (strain HCC23).